The chain runs to 176 residues: Prenylated Rab acceptor 1 (176 aa).

Position 1 is an N-acetylmethionine (methionine 1). The short motif at serine 11–phenylalanine 13 is the SKL peroxisome targeting motif element. Position 18 is a phosphoserine (serine 18). 2 helical membrane passes run leucine 84–isoleucine 104 and valine 129–isoleucine 149.

This sequence belongs to the PRA1 family. Interacts with YIP1 and the Rab GTPases SEC4, YPT1, YPT6, YPT10, YPT11, YPT31, YPT32 and YPT52.

Its subcellular location is the golgi apparatus membrane. It localises to the peroxisome membrane. In Saccharomyces cerevisiae (strain ATCC 204508 / S288c) (Baker's yeast), this protein is Prenylated Rab acceptor 1 (YIP3).